A 343-amino-acid polypeptide reads, in one-letter code: Heat-inducible transcription repressor HrcA (343 aa).

The protein belongs to the HrcA family.

Functionally, negative regulator of class I heat shock genes (grpE-dnaK-dnaJ and groELS operons). Prevents heat-shock induction of these operons. The polypeptide is Heat-inducible transcription repressor HrcA (Thermoanaerobacter pseudethanolicus (strain ATCC 33223 / 39E) (Clostridium thermohydrosulfuricum)).